A 119-amino-acid chain; its full sequence is Putative transmembrane protein ORF119 (119 aa).

A run of 3 helical transmembrane segments spans residues 9 to 29 (TLAI…PAMV), 73 to 93 (QYAG…SIFT), and 95 to 115 (PIAL…AFYY).

The protein localises to the host membrane. The polypeptide is Putative transmembrane protein ORF119 (Acidianus convivator (ATV)).